A 393-amino-acid polypeptide reads, in one-letter code: Reticulon-like protein 2 (393 aa).

Low complexity predominate over residues 1 to 21 (MNRNTTTNKNANLNNSRNANA). The interval 1–25 (MNRNTTTNKNANLNNSRNANAPGEA) is disordered. Over 1 to 60 (MNRNTTTNKNANLNNSRNANAPGEAGHQNKTGLIYWTNPSKSGASFAATLVSLLILRNVN) the chain is Cytoplasmic. A Reticulon domain is found at 30 to 236 (KTGLIYWTNP…SISNENKSST (207 aa)). A helical transmembrane segment spans residues 61-81 (VISVLLKIGYMVLFTSFAVEL). Residues 82 to 149 (STKVLFDKGV…IGVSLYFLHG (68 aa)) are Lumenal-facing. Asparagine 137 carries an N-linked (GlcNAc...) asparagine glycan. A helical transmembrane segment spans residues 150–170 (LFAIFSMNTVLIMTTIFLYTV). Topologically, residues 171–393 (PLIYDRKQAR…HGLKQKLQHA (223 aa)) are cytoplasmic. Disordered regions lie at residues 214–313 (IIPP…DVKT) and 339–393 (GDYN…LQHA). Over residues 220 to 285 (DEGSYSTSIS…PVSQNENIGT (66 aa)) the composition is skewed to polar residues. Serine 278 is modified (phosphoserine). Over residues 289–313 (GKQEIPTEKDFNNRHENFSKPDVKT) the composition is skewed to basic and acidic residues. Residues 365–376 (PAESQSIPIKNN) are compositionally biased toward polar residues. Basic residues predominate over residues 381-393 (KTTHGLKQKLQHA).

The protein localises to the endoplasmic reticulum membrane. This Saccharomyces cerevisiae (strain ATCC 204508 / S288c) (Baker's yeast) protein is Reticulon-like protein 2 (RTN2).